The following is a 362-amino-acid chain: Putative protein ARB2BP (362 aa).

A helical transmembrane segment spans residues 229-245 (IAFIVHGYGGLVFMDLL).

Belongs to the ARB2 family.

It is found in the membrane. This is Putative protein ARB2BP from Homo sapiens (Human).